Reading from the N-terminus, the 295-residue chain is Tetrahydromethanopterin S-methyltransferase subunit E (295 aa).

Transmembrane regions (helical) follow at residues 4–24, 60–80, 87–107, 140–160, 161–181, 234–254, and 255–275; these read MITG…AGAA, GEPV…FVLM, VIMA…TYAV, GFIV…PIPG, FAHP…IGAI, YGGP…FWNT, and IVFG…LLII.

It belongs to the MtrE family. In terms of assembly, the complex is composed of 8 subunits; MtrA, MtrB, MtrC, MtrD, MtrE, MtrF, MtrG and MtrH.

It localises to the cell membrane. It catalyses the reaction 5-methyl-5,6,7,8-tetrahydromethanopterin + coenzyme M + 2 Na(+)(in) = 5,6,7,8-tetrahydromethanopterin + methyl-coenzyme M + 2 Na(+)(out). It participates in one-carbon metabolism; methanogenesis from CO(2); methyl-coenzyme M from 5,10-methylene-5,6,7,8-tetrahydromethanopterin: step 2/2. In terms of biological role, part of a complex that catalyzes the formation of methyl-coenzyme M and tetrahydromethanopterin from coenzyme M and methyl-tetrahydromethanopterin. This is an energy-conserving, sodium-ion translocating step. The sequence is that of Tetrahydromethanopterin S-methyltransferase subunit E from Methanothermobacter marburgensis (strain ATCC BAA-927 / DSM 2133 / JCM 14651 / NBRC 100331 / OCM 82 / Marburg) (Methanobacterium thermoautotrophicum).